Consider the following 351-residue polypeptide: Histidinol-phosphate aminotransferase (351 aa).

The residue at position 221 (Lys221) is an N6-(pyridoxal phosphate)lysine.

The protein belongs to the class-II pyridoxal-phosphate-dependent aminotransferase family. Histidinol-phosphate aminotransferase subfamily. Homodimer. It depends on pyridoxal 5'-phosphate as a cofactor.

The enzyme catalyses L-histidinol phosphate + 2-oxoglutarate = 3-(imidazol-4-yl)-2-oxopropyl phosphate + L-glutamate. It functions in the pathway amino-acid biosynthesis; L-histidine biosynthesis; L-histidine from 5-phospho-alpha-D-ribose 1-diphosphate: step 7/9. The protein is Histidinol-phosphate aminotransferase of Staphylococcus epidermidis (strain ATCC 12228 / FDA PCI 1200).